The sequence spans 89 residues: Cell division topological specificity factor (89 aa).

Belongs to the MinE family.

Prevents the cell division inhibition by proteins MinC and MinD at internal division sites while permitting inhibition at polar sites. This ensures cell division at the proper site by restricting the formation of a division septum at the midpoint of the long axis of the cell. This chain is Cell division topological specificity factor, found in Paracoccus denitrificans (strain Pd 1222).